Here is a 455-residue protein sequence, read N- to C-terminus: Epoxide hydrolase 1 (455 aa).

Residues 1-21 (MWLELILASVLGFVIYWFVSR) traverse the membrane as a helical; Signal-anchor for type III membrane protein segment. At 22–455 (DKEETLPLED…RKFVSLAELQ (434 aa)) the chain is on the cytoplasmic side. Asp226 serves as the catalytic Nucleophile. Arg295 carries the post-translational modification Dimethylated arginine. Tyr374 acts as the Proton donor in catalysis. The active-site Proton acceptor is His431. Lys439 carries the N6-acetyllysine modification.

The protein belongs to the peptidase S33 family.

Its subcellular location is the microsome membrane. It localises to the endoplasmic reticulum membrane. It carries out the reaction cis-stilbene oxide + H2O = (1R,2R)-hydrobenzoin. The enzyme catalyses 1-(4-methoxyphenyl)-N-methyl-N-[(3-methyloxetan-3-yl)methyl]methanamine + H2O = 2-{[(4-methoxybenzyl)(methyl)amino]methyl}-2-methylpropane-1,3-diol. It catalyses the reaction 8,9-epoxy-(5Z,11Z,14Z)-eicosatrienoate + H2O = 8,9-dihydroxy-(5Z,11Z,14Z)-eicosatrienoate. The catalysed reaction is 11,12-epoxy-(5Z,8Z,14Z)-eicosatrienoate + H2O = 11,12-dihydroxy-(5Z,8Z,14Z)-eicosatrienoate. It carries out the reaction 2-(5Z,8Z,11Z,14Z-eicosatetraenoyl)-glycerol + H2O = glycerol + (5Z,8Z,11Z,14Z)-eicosatetraenoate + H(+). With respect to regulation, inhibited by 10-hydroxystearamide and methoxy-arachidonyl fluorophosphate. Functionally, biotransformation enzyme that catalyzes the hydrolysis of arene and aliphatic epoxides to less reactive and more water soluble dihydrodiols by the trans addition of water. May play a role in the metabolism of endogenous lipids such as epoxide-containing fatty acids. Metabolizes the abundant endocannabinoid 2-arachidonoylglycerol (2-AG) to free arachidonic acid (AA) and glycerol. Binds 20(S)-hydroxycholesterol (20(S)-OHC). The sequence is that of Epoxide hydrolase 1 from Mus musculus (Mouse).